The primary structure comprises 406 residues: Zinc finger protein 793 (406 aa).

Residues 8–79 (VSFKDVVVGF…EAACPGCHCW (72 aa)) form the KRAB domain. 6 consecutive C2H2-type zinc fingers follow at residues 227 to 249 (HVCSECGKAFCYKSEFIRHQRSH), 255 to 277 (YGCTDCGKAFSHKSTLIKHQRIH), 283 to 305 (FECFFCGKAFTQKSHRTEHQRTH), 311 to 333 (FVCSECGKSFGEKSYLNVHRKMH), 339 to 361 (YRCRECGKSFSQKSCLNKHWRTH), and 367 to 389 (YGCNECGKAFYQKPNLSRHQKIH).

Belongs to the krueppel C2H2-type zinc-finger protein family.

The protein resides in the nucleus. In terms of biological role, may be involved in transcriptional regulation. The polypeptide is Zinc finger protein 793 (ZNF793) (Homo sapiens (Human)).